We begin with the raw amino-acid sequence, 1331 residues long: Mitogen-activated protein kinase kinase kinase 15 (1331 aa).

Gly residues predominate over residues 1–13; the sequence is MEGGGGSGGGGGP. The interval 1-61 is disordered; it reads MEGGGGSGGG…GEAEGGRGPR (61 aa). In terms of domain architecture, Protein kinase spans 656 to 912; sequence NGERVVLGKG…AADLLQEGFL (257 aa). ATP is bound by residues 662-670 and lysine 685; that span reads LGKGSYGIV. Aspartate 777 (proton acceptor) is an active-site residue. Disordered regions lie at residues 934-964 and 983-1005; these read GTGTLALPSSGELVGSSSSEHGSISPDSDAQ and LSVPDESPALDDRSTALPPEERD. Residues 940-962 show a composition bias toward low complexity; that stretch reads LPSSGELVGSSSSEHGSISPDSD. The span at 992 to 1005 shows a compositional bias: basic and acidic residues; that stretch reads LDDRSTALPPEERD. Residues 1216–1236 are a coiled coil; sequence LVQKEREYQNLLRLILDQKTQ.

Belongs to the protein kinase superfamily. STE Ser/Thr protein kinase family. MAP kinase kinase kinase subfamily. The cofactor is Mg(2+).

The enzyme catalyses L-seryl-[protein] + ATP = O-phospho-L-seryl-[protein] + ADP + H(+). The catalysed reaction is L-threonyl-[protein] + ATP = O-phospho-L-threonyl-[protein] + ADP + H(+). With respect to regulation, contains an N-terminal autoinhibitory domain. Activated by phosphorylation at Thr-816, inhibited by phosphorylation at Ser-928. In terms of biological role, serine/threonine kinase which acts as a component of the MAP kinase signal transduction pathway. Once activated, acts as an upstream activator of the p38 MAPK signal transduction cascade through the phosphorylation and activation of several MAP kinase kinases. May function in a signal transduction pathway that is activated by various cell stresses and leads to apoptosis. Involved in phosphorylation of WNK4 in response to osmotic stress or hypotonic low-chloride stimulation via the p38 MAPK signal transduction cascade. The chain is Mitogen-activated protein kinase kinase kinase 15 from Mus musculus (Mouse).